We begin with the raw amino-acid sequence, 488 residues long: Zinc finger protein 92 (488 aa).

The region spanning Val14–Ser85 is the KRAB domain. C2H2-type zinc fingers lie at residues Tyr141 to His163, Tyr169 to His191, Tyr197 to His219, Phe225 to His247, Phe253 to His275, and Tyr281 to His303. The C2H2-type 7; degenerate zinc finger occupies Phe309–His331. The segment at Tyr337–His359 adopts a C2H2-type 8 zinc-finger fold. The interval Gln387–Lys408 is disordered. A C2H2-type 9 zinc finger spans residues Gln410 to His432. Residues Glu435–Pro488 form a disordered region.

It belongs to the krueppel C2H2-type zinc-finger protein family. In terms of tissue distribution, highly expressed in pancreatic islets.

The protein localises to the nucleus. Its function is as follows. KRAB domain-containing zinc-finger protein that represses B1/Alu SINE transposable elements and modulates the transcription of nearby genes in a tissue-specific manner. It regulates glucose homeostasis and lipid metabolism by modulating the expression of the endocrine cell-defining transcription factor, MAFB, in pancreatic islets and, the fat metabolism regulator, ACACB, in adipose tissue and muscle. In Mus musculus (Mouse), this protein is Zinc finger protein 92 (Zfp92).